We begin with the raw amino-acid sequence, 429 residues long: Putative pentatricopeptide repeat-containing protein At1g03510 (429 aa).

10 PPR repeats span residues 11–45, 47–81, 82–112, 113–147, 148–180, 181–215, 216–246, 247–281, 282–312, and 318–348; these read KLIS…FALP, DAHV…NFLS, NPFV…IPQR, NAVV…PNES, SFNA…RFKP, NLIT…LIEP, HPQL…MEDR, DVVA…KVTP, DDIA…MQGD, and SKDH…MPEK. The type E motif stretch occupies residues 353–428; the sequence is TWGALLGACR…SPGSSWCLFK (76 aa).

It belongs to the PPR family. PCMP-E subfamily.

The protein is Putative pentatricopeptide repeat-containing protein At1g03510 (PCMP-E3) of Arabidopsis thaliana (Mouse-ear cress).